The primary structure comprises 332 residues: tRNA-dihydrouridine(20/20a) synthase (332 aa).

FMN-binding positions include 20-22 and glutamine 73; that span reads PMM. Cysteine 103 (proton donor) is an active-site residue. FMN-binding positions include lysine 142, histidine 174, 214–216, and 236–237; these read NGG and GR.

Belongs to the Dus family. DusA subfamily. FMN is required as a cofactor.

It catalyses the reaction 5,6-dihydrouridine(20) in tRNA + NADP(+) = uridine(20) in tRNA + NADPH + H(+). It carries out the reaction 5,6-dihydrouridine(20) in tRNA + NAD(+) = uridine(20) in tRNA + NADH + H(+). The enzyme catalyses 5,6-dihydrouridine(20a) in tRNA + NADP(+) = uridine(20a) in tRNA + NADPH + H(+). The catalysed reaction is 5,6-dihydrouridine(20a) in tRNA + NAD(+) = uridine(20a) in tRNA + NADH + H(+). Functionally, catalyzes the synthesis of 5,6-dihydrouridine (D), a modified base found in the D-loop of most tRNAs, via the reduction of the C5-C6 double bond in target uridines. Specifically modifies U20 and U20a in tRNAs. The chain is tRNA-dihydrouridine(20/20a) synthase from Pseudomonas aeruginosa (strain ATCC 15692 / DSM 22644 / CIP 104116 / JCM 14847 / LMG 12228 / 1C / PRS 101 / PAO1).